Reading from the N-terminus, the 139-residue chain is ATP synthase epsilon chain (139 aa).

The protein belongs to the ATPase epsilon chain family. As to quaternary structure, F-type ATPases have 2 components, CF(1) - the catalytic core - and CF(0) - the membrane proton channel. CF(1) has five subunits: alpha(3), beta(3), gamma(1), delta(1), epsilon(1). CF(0) has three main subunits: a, b and c.

Its subcellular location is the cell inner membrane. In terms of biological role, produces ATP from ADP in the presence of a proton gradient across the membrane. This chain is ATP synthase epsilon chain, found in Nitrosospira multiformis (strain ATCC 25196 / NCIMB 11849 / C 71).